The following is a 310-amino-acid chain: tRNA-cytidine(32) 2-sulfurtransferase (310 aa).

The PP-loop motif signature appears at 48-53; it reads SGGKDS. [4Fe-4S] cluster is bound by residues cysteine 123, cysteine 126, and cysteine 214.

Belongs to the TtcA family. In terms of assembly, homodimer. Mg(2+) is required as a cofactor. Requires [4Fe-4S] cluster as cofactor.

It is found in the cytoplasm. It catalyses the reaction cytidine(32) in tRNA + S-sulfanyl-L-cysteinyl-[cysteine desulfurase] + AH2 + ATP = 2-thiocytidine(32) in tRNA + L-cysteinyl-[cysteine desulfurase] + A + AMP + diphosphate + H(+). Its pathway is tRNA modification. Its function is as follows. Catalyzes the ATP-dependent 2-thiolation of cytidine in position 32 of tRNA, to form 2-thiocytidine (s(2)C32). The sulfur atoms are provided by the cysteine/cysteine desulfurase (IscS) system. This chain is tRNA-cytidine(32) 2-sulfurtransferase, found in Vibrio vulnificus (strain YJ016).